A 199-amino-acid polypeptide reads, in one-letter code: Signal peptidase complex subunit 2 (199 aa).

Residues 1–49 (MGKKDEKSQQGEELVKVNKWDGSAVKHALDDAVKTCLLGDRPQLKEQFG) lie on the Cytoplasmic side of the membrane. A helical transmembrane segment spans residues 50-72 (LVNTRLALCALAVSVAIMAHAWD). Over 73–81 (FTHPFPESR) the chain is Lumenal. The chain crosses the membrane as a helical span at residues 82–104 (PVLLFSVLAYFALLGILTLHSSF). The Cytoplasmic portion of the chain corresponds to 105-199 (REKGTFAVAL…KKNASSLSSN (95 aa)).

Belongs to the SPCS2 family. As to quaternary structure, component of the signal peptidase complex (SPC) composed of a catalytic subunit twr/SEC11 and three accessory subunits Spase12/SPCS1, Spase25/SPCS2 and Spase22-23/SPCS3. The complex induces a local thinning of the ER membrane which is used to measure the length of the signal peptide (SP) h-region of protein substrates. This ensures the selectivity of the complex towards h-regions shorter than 18-20 amino acids.

Its subcellular location is the endoplasmic reticulum membrane. Its function is as follows. Component of the signal peptidase complex (SPC) which catalyzes the cleavage of N-terminal signal sequences from nascent proteins as they are translocated into the lumen of the endoplasmic reticulum. Enhances the enzymatic activity of SPC and facilitates the interactions between different components of the translocation site. The polypeptide is Signal peptidase complex subunit 2 (Spase25) (Drosophila melanogaster (Fruit fly)).